Reading from the N-terminus, the 618-residue chain is UvrABC system protein C (618 aa).

Positions D13–I92 constitute a GIY-YIG domain. One can recognise a UVR domain in the interval L204–I239.

It belongs to the UvrC family. As to quaternary structure, interacts with UvrB in an incision complex.

It localises to the cytoplasm. In terms of biological role, the UvrABC repair system catalyzes the recognition and processing of DNA lesions. UvrC both incises the 5' and 3' sides of the lesion. The N-terminal half is responsible for the 3' incision and the C-terminal half is responsible for the 5' incision. In Clostridium botulinum (strain ATCC 19397 / Type A), this protein is UvrABC system protein C.